The following is an 892-amino-acid chain: Alanine--tRNA ligase (892 aa).

Zn(2+) is bound by residues H574, H578, C676, and H680.

It belongs to the class-II aminoacyl-tRNA synthetase family. The cofactor is Zn(2+).

The protein resides in the cytoplasm. It catalyses the reaction tRNA(Ala) + L-alanine + ATP = L-alanyl-tRNA(Ala) + AMP + diphosphate. In terms of biological role, catalyzes the attachment of alanine to tRNA(Ala) in a two-step reaction: alanine is first activated by ATP to form Ala-AMP and then transferred to the acceptor end of tRNA(Ala). Also edits incorrectly charged Ser-tRNA(Ala) and Gly-tRNA(Ala) via its editing domain. This Prochlorococcus marinus (strain MIT 9313) protein is Alanine--tRNA ligase.